A 246-amino-acid chain; its full sequence is Submandibular gland secretory Glx-rich protein CA (246 aa).

The N-terminal stretch at 1–18 (MLVVLLTAALLALSSAQG) is a signal peptide. Residues 14-223 (SSAQGTDEEV…SGRPKKPLLP (210 aa)) are disordered. 7 stretches are compositionally biased toward low complexity: residues 39-50 (PVDSGSDPPSAD), 58-71 (EGES…EPPA), 81-93 (QQEP…QEPP), 104-116 (QQEP…QEPP), 127-141 (QQEP…PPAT), 150-159 (QQESTQAENQ), and 178-196 (VESP…QQTN). 5 tandem repeats follow at residues 67–89 (EEPP…QAEN), 90–112 (QEPP…QAEN), 113–135 (QEPP…QAED), 136–158 (QQPP…QAEN), and 159–181 (QEPS…VESP). A 5 X 23 AA tandem repeats region spans residues 67–181 (EEPPATSGSE…QPEEGNVESP (115 aa)). Basic and acidic residues predominate over residues 197-216 (PEEKPPAPKTQEEPQHDSGR).

In terms of tissue distribution, submandibular gland acinar cells.

It is found in the secreted. In terms of biological role, GRP proteins have a marked affinity for hydroxyapatite. They may play a role in the formation of the protective acquired pellicle at the saliva-tooth interface. The sequence is that of Submandibular gland secretory Glx-rich protein CA (Grpca) from Rattus norvegicus (Rat).